Here is a 284-residue protein sequence, read N- to C-terminus: Prolyl 4-hydroxylase subunit alpha (284 aa).

One can recognise a Fe2OG dioxygenase domain in the interval 169–284; that stretch reads NFNSIKTQTQ…PRIAITTWIY (116 aa). 3 residues coordinate Fe cation: His-191, Asp-193, and His-266. A 2-oxoglutarate-binding site is contributed by Arg-276.

It belongs to the P4HA family. Heterotetramer of two alpha-1 chains and two beta chains (the beta chain is the multi-functional PDI). Fe(2+) is required as a cofactor. The cofactor is L-ascorbate.

It is found in the cytoplasm. It catalyses the reaction L-prolyl-[Skp1 protein] + 2-oxoglutarate + O2 = trans-4-hydroxy-L-prolyl-[Skp1 protein] + succinate + CO2. Its activity is regulated as follows. Inhibited by the prolyl-hydroxylase inhibitors alpha,alpha'-dipyridyl and ethyl 3,4-dihydroxybenzoate. In terms of biological role, catalyzes the post-translational formation of 4-hydroxyproline. Probably hydroxylates skp1 on Pro-143. This chain is Prolyl 4-hydroxylase subunit alpha (phyA), found in Dictyostelium discoideum (Social amoeba).